We begin with the raw amino-acid sequence, 363 residues long: Pyrimidine monooxygenase RutA (363 aa).

FMN is bound by residues 49–50 (IK), N115, E124, 140–141 (RY), and S190.

This sequence belongs to the NtaA/SnaA/DszA monooxygenase family. RutA subfamily.

The enzyme catalyses uracil + FMNH2 + NADH + O2 = (Z)-3-ureidoacrylate + FMN + NAD(+) + H2O + H(+). The catalysed reaction is thymine + FMNH2 + NADH + O2 = (Z)-2-methylureidoacrylate + FMN + NAD(+) + H2O + H(+). Functionally, catalyzes the pyrimidine ring opening between N-3 and C-4 by an unusual flavin hydroperoxide-catalyzed mechanism, adding oxygen atoms in the process to yield ureidoacrylate peracid, that immediately reacts with FMN forming ureidoacrylate and FMN-N(5)-oxide. The FMN-N(5)-oxide reacts spontaneously with NADH to produce FMN. Requires the flavin reductase RutF to regenerate FMN in vivo. The protein is Pyrimidine monooxygenase RutA of Escherichia coli (strain SMS-3-5 / SECEC).